Consider the following 693-residue polypeptide: Sulfite reductase 1 [ferredoxin], chloroplastic (693 aa).

A chloroplast-targeting transit peptide spans 1 to 62 (MTTSFGAAIN…PSSIVRAVST (62 aa)). Residues Cys-502, Cys-508, Cys-548, and Cys-552 each contribute to the [4Fe-4S] cluster site. Residue Cys-552 coordinates siroheme.

The protein belongs to the nitrite and sulfite reductase 4Fe-4S domain family. Monomer. Interacts with ferredoxin. Siroheme is required as a cofactor. Requires [4Fe-4S] cluster as cofactor. Phosphorylated; this phosphorylation reduces DNA-binding. In terms of tissue distribution, expressed in leaves, stems, roots and petals.

The protein localises to the plastid. It localises to the chloroplast stroma. Its subcellular location is the chloroplast nucleoid. The protein resides in the plastid stroma. It carries out the reaction hydrogen sulfide + 6 oxidized [2Fe-2S]-[ferredoxin] + 3 H2O = sulfite + 6 reduced [2Fe-2S]-[ferredoxin] + 7 H(+). Functionally, essential protein with sulfite reductase activity required in assimilatory sulfate reduction pathway during both primary and secondary metabolism and thus involved in development and growth. Its function is as follows. DNA-binding protein that binds to both double-stranded and single-stranded DNA without significant sequence specificity to reversibly repress the transcriptional activity of chloroplast nucleoids by promoting DNA compaction and possibly regulate DNA replication. This chain is Sulfite reductase 1 [ferredoxin], chloroplastic (SIR1), found in Nicotiana tabacum (Common tobacco).